Consider the following 167-residue polypeptide: Kininogen-1 (167 aa).

An N-terminal signal peptide occupies residues 1–23 (MRLWFCLSFFIILCLEHFPGTLA).

The protein belongs to the bradykinin-related peptide family. Expressed by the skin glands.

It is found in the secreted. Its function is as follows. Vasodilator. Bradykinin produces in vitro relaxation of rat arterial smooth muscle and constriction of intestinal smooth muscle. May target bradykinin receptors (BDKRB). The chain is Kininogen-1 from Bombina orientalis (Oriental fire-bellied toad).